A 236-amino-acid chain; its full sequence is 2,3,4,5-tetrahydropyridine-2,6-dicarboxylate N-acetyltransferase (236 aa).

It belongs to the transferase hexapeptide repeat family. DapH subfamily.

It catalyses the reaction (S)-2,3,4,5-tetrahydrodipicolinate + acetyl-CoA + H2O = L-2-acetamido-6-oxoheptanedioate + CoA. It participates in amino-acid biosynthesis; L-lysine biosynthesis via DAP pathway; LL-2,6-diaminopimelate from (S)-tetrahydrodipicolinate (acetylase route): step 1/3. Its function is as follows. Catalyzes the transfer of an acetyl group from acetyl-CoA to tetrahydrodipicolinate. The sequence is that of 2,3,4,5-tetrahydropyridine-2,6-dicarboxylate N-acetyltransferase from Brevibacillus brevis (strain 47 / JCM 6285 / NBRC 100599).